Consider the following 688-residue polypeptide: Elongation factor G (688 aa).

One can recognise a tr-type G domain in the interval 8–282 (EKFRNIGIMA…AVVDFMPSPL (275 aa)). GTP contacts are provided by residues 17-24 (AHIDAGKT), 81-85 (DTPGH), and 135-138 (NKMD). The interval 282 to 305 (LDIPPIKGTDPETGEETDRPADDN) is disordered.

This sequence belongs to the TRAFAC class translation factor GTPase superfamily. Classic translation factor GTPase family. EF-G/EF-2 subfamily.

The protein resides in the cytoplasm. Functionally, catalyzes the GTP-dependent ribosomal translocation step during translation elongation. During this step, the ribosome changes from the pre-translocational (PRE) to the post-translocational (POST) state as the newly formed A-site-bound peptidyl-tRNA and P-site-bound deacylated tRNA move to the P and E sites, respectively. Catalyzes the coordinated movement of the two tRNA molecules, the mRNA and conformational changes in the ribosome. This chain is Elongation factor G, found in Clostridium kluyveri (strain NBRC 12016).